The chain runs to 232 residues: MKTLVVCSGGLDSVSLAYRIASEHQLTALLSFDYGQRHKKELDSAKACAERLGVPHQIIDITNIGASLTGSALTDDIDVPDGHYAEETMKITVVPNRNAIMLAIAFGVAAAQKAEAIALAVHGGDHFIYPDCRPGFIDAFQTMQNHALDGYADIKLLAPYVHASKADIVIDGAKHGAPFAATWSCYKGGEHHCGRCGTCVERREAFHLAGVEDPTLYEDADFWRSAIEKRNA.

Residue 7–17 (CSGGLDSVSLA) participates in ATP binding. 4 residues coordinate Zn(2+): cysteine 185, cysteine 193, cysteine 196, and cysteine 199.

The protein belongs to the QueC family. The cofactor is Zn(2+).

The enzyme catalyses 7-carboxy-7-deazaguanine + NH4(+) + ATP = 7-cyano-7-deazaguanine + ADP + phosphate + H2O + H(+). It participates in purine metabolism; 7-cyano-7-deazaguanine biosynthesis. Functionally, catalyzes the ATP-dependent conversion of 7-carboxy-7-deazaguanine (CDG) to 7-cyano-7-deazaguanine (preQ(0)). This chain is 7-cyano-7-deazaguanine synthase, found in Brucella anthropi (strain ATCC 49188 / DSM 6882 / CCUG 24695 / JCM 21032 / LMG 3331 / NBRC 15819 / NCTC 12168 / Alc 37) (Ochrobactrum anthropi).